Here is a 158-residue protein sequence, read N- to C-terminus: Globin CTT-I/CTT-IA (158 aa).

Residues 1 to 15 (MKFLILALCVAAAMA) form the signal peptide. The region spanning 16–158 (GPSGDQIAAA…FVFSTLKNEL (143 aa)) is the Globin domain. Heme b contacts are provided by His74 and His109.

It belongs to the globin family. Monomer.

The chain is Globin CTT-I/CTT-IA (CTT-1) from Chironomus thummi thummi (Midge).